The chain runs to 70 residues: V-type proton ATPase subunit e1 (70 aa).

Transmembrane regions (helical) follow at residues 1–21 and 36–56; these read MGFLITTLIFVVVGIIASLCV and LTLVITATVCCWMMWAIVYIA.

It belongs to the V-ATPase e1/e2 subunit family. In terms of assembly, V-ATPase is a heteromultimeric enzyme composed of a peripheral catalytic V1 complex (components A to H) attached to an integral membrane V0 proton pore complex (components: a, c, c'', d and e).

Its subcellular location is the golgi apparatus. The protein localises to the trans-Golgi network membrane. In terms of biological role, subunit of the integral membrane V0 complex of vacuolar ATPase. V-ATPase is responsible for acidifying a variety of intracellular compartments in eukaryotic cells. This Arabidopsis thaliana (Mouse-ear cress) protein is V-type proton ATPase subunit e1 (VHA-e1).